Here is a 319-residue protein sequence, read N- to C-terminus: Taste receptor type 2 member 39 (319 aa).

Over 1 to 16 (MAQPSNYWKQDLLPLS) the chain is Extracellular. Residues 17 to 37 (ILILTLVATECTIGIIASGII) traverse the membrane as a helical segment. Residues 38-56 (TVVNAVSWVQKRAVSITTR) are Cytoplasmic-facing. Residues 57 to 77 (ILLLLSVSRIGLQSIILIEMT) traverse the membrane as a helical segment. Residues 78–97 (SSIFNFSSYNSVLYRVSRVS) are Extracellular-facing. Asn82 carries N-linked (GlcNAc...) asparagine glycosylation. Residues 98 to 118 (FVFLNYCSLWFAALLSFFHFV) traverse the membrane as a helical segment. The Cytoplasmic segment spans residues 119–137 (KIANFSYPLFFKLKWRISE). The helical transmembrane segment at 138 to 158 (LMPWLLWLSVFISFSSSMFFC) threads the bilayer. At 159-187 (NHKYTVYNNISLSSNICNFTMELYVAEAN) the chain is on the extracellular side. N-linked (GlcNAc...) asparagine glycosylation is found at Asn167 and Asn176. Residues 188-208 (VVNVAFLFSFGILPPLTMFIA) form a helical membrane-spanning segment. Residues 209 to 247 (TATLLIFSLRRHTLHMRNGDADSRNPRVEAHKQAIKETS) lie on the Cytoplasmic side of the membrane. The chain crosses the membrane as a helical span at residues 248 to 268 (CFLFLYILYAAVLFLSTSNIA). Residues 269–273 (DASLF) lie on the Extracellular side of the membrane. The chain crosses the membrane as a helical span at residues 274-294 (WSSVLRISLPVYPAGHSVLLI). Residues 295–319 (QSNPGLKRTWKQLLSQIHLHLQSRY) lie on the Cytoplasmic side of the membrane.

Belongs to the G-protein coupled receptor T2R family.

The protein resides in the membrane. Functionally, putative taste receptor which may play a role in the perception of bitterness. The protein is Taste receptor type 2 member 39 of Rattus norvegicus (Rat).